Consider the following 402-residue polypeptide: Deoxyguanosinetriphosphate triphosphohydrolase-like protein (402 aa).

The disordered stretch occupies residues 20–39 (PAFSRGRLVPEPESPTRTPF). Residues 73–217 (RLTHTIEVAQ…AAIADDIAYN (145 aa)) enclose the HD domain.

This sequence belongs to the dGTPase family. Type 2 subfamily.

The sequence is that of Deoxyguanosinetriphosphate triphosphohydrolase-like protein from Brucella canis (strain ATCC 23365 / NCTC 10854 / RM-666).